Consider the following 347-residue polypeptide: NADH-ubiquinone oxidoreductase chain 2 (347 aa).

11 consecutive transmembrane segments (helical) span residues 3–23, 25–45, 59–79, 96–116, 122–142, 149–169, 178–198, 201–221, 237–257, 274–294, and 323–343; these read PPIF…VMTS, HWML…PILM, YFLT…INLL, ILMT…FWVP, ISLS…LSIL, INPH…GWGG, IMAY…LYNP, MFLN…LFML, APLI…LPPL, EMII…YFYM, and TIFL…TPMI.

This sequence belongs to the complex I subunit 2 family. In terms of assembly, core subunit of respiratory chain NADH dehydrogenase (Complex I) which is composed of 45 different subunits. Interacts with TMEM242.

It localises to the mitochondrion inner membrane. It carries out the reaction a ubiquinone + NADH + 5 H(+)(in) = a ubiquinol + NAD(+) + 4 H(+)(out). Its function is as follows. Core subunit of the mitochondrial membrane respiratory chain NADH dehydrogenase (Complex I) which catalyzes electron transfer from NADH through the respiratory chain, using ubiquinone as an electron acceptor. Essential for the catalytic activity and assembly of complex I. In Viverra tangalunga (Malayan civet), this protein is NADH-ubiquinone oxidoreductase chain 2.